The sequence spans 963 residues: MLYIRKKMTSMIVKTTPELFKGNGVFRTDHLGENRMVSRSNRLGDGSNRFPRTGTIHCQRLSIAKTGLHRETKARAILSPVSDPAASIAQKRVFTFGKGRSEGNKGMKSLLGGKGANLAEMASIGLSVPPGLTISTEACQQYQIAGKKLPEGLWEEILEGLSFIERDIGASLADPSKPLLLSVRSGAAISMPGMMDTVLNLGLNDQVVVGLAAKSGERFAYDSFRRFLDMFGDVVMGIPHAKFEEKLERMKERKGVKNDTDLSAADLKELVEQYKSVYLEAKGQEFPSDPKKQLELAIEAVFDSWDSPRANKYRSINQITGLKGTAVNIQCMVFGNMGDTSGTGVLFTRNPSTGEKKLYGEFLVNAQGEDVVAGIRTPEDLDTMKRFMPEAYAELVENCNILERHYKDMMDIEFTVQEERLWMLQCRAGKRTGKGAVKIAVDMVGEGLVEKSSAIKMVEPQHLDQLLHPQFHDPSGYREKVVAKGLPASPGAAVGQVVFTAEEAEAWHSQGKTVILVRTETSPDDVGGMHAAEGILTARGGMTSHAAVVARGWGKCCIAGCSEIRVDENHKVLLIGDLTINEGEWISMNGSTGEVILGKQALAPPALSPDLETFMSWADAIRRLKVMANADTPEDAIAARKNGAQGIGLCRTEHMFFGADRIKAVRKMIMAVTTEQRKASLDILLPYQRSDFEGIFRAMDGLPVTIRLLDPPLHEFLPEGDLDNIVHELAEETGVKEDEVLSRIEKLSEVNPMLGFRGCRLGISYPELTEMQARAIFEAAASMQDQGVTVIPEIMVPLVGTPQELGHQVDVIRKVAKKVFAEKGHTVSYKVGTMIEIPRAALIADEIAKEAEFFSFGTNDLTQMTFGYSRDDVGKFLPIYLAKGILQHDPFEVLDQQGVGQLIKMATEKGRAARPSLKVGICGEHGGDPSSVGFFAEAGLDYVSCSPFRVPIARLAAAQVVVA.

The transit peptide at 1-76 (MLYIRKKMTS…GLHRETKARA (76 aa)) directs the protein to the chloroplast. The residue at position 543 (T543) is a Phosphothreonine; by PDRP1. The active-site Tele-phosphohistidine intermediate is H545. Substrate contacts are provided by R651, R707, E836, G857, T858, N859, and D860. Position 836 (E836) interacts with Mg(2+). D860 serves as a coordination point for Mg(2+). The active-site Proton donor is C922.

The protein belongs to the PEP-utilizing enzyme family. Homotetramer. Interacts with RP1 and RP2. Requires Mg(2+) as cofactor. Post-translationally, phosphorylation of Thr-543 in the dark inactivates the enzyme. Dephosphorylation upon light stimulation reactivates the enzyme. As to expression, isoform 1 is expressed in leaves, flowers and siliques. Isoform 2 is found in cotyledons, rosette and cauline leaves, petioles, flowers and siliques.

The protein localises to the plastid. It localises to the chloroplast. The protein resides in the cytoplasm. The enzyme catalyses pyruvate + phosphate + ATP = phosphoenolpyruvate + AMP + diphosphate + H(+). With respect to regulation, activated by light-induced dephosphorylation. Inhibited by dark-induced phosphorylation. Both reactions are catalyzed by PDRP1. Functionally, formation of phosphoenolpyruvate. May be involved in regulating the flux of carbon into starch and fatty acids of seeds and in the remobilization of nitrogen reserves in senescing leaves. The protein is Pyruvate, phosphate dikinase 1, chloroplastic (PPDK) of Arabidopsis thaliana (Mouse-ear cress).